A 339-amino-acid polypeptide reads, in one-letter code: Glycerol-3-phosphate dehydrogenase [NAD(P)+] (339 aa).

Ser14, Tyr15, His35, and Lys109 together coordinate NADPH. The sn-glycerol 3-phosphate site is built by Lys109, Gly138, and Thr140. Position 142 (Ala142) interacts with NADPH. Residues Lys194, Asp247, Ser257, Arg258, and Asn259 each contribute to the sn-glycerol 3-phosphate site. Lys194 functions as the Proton acceptor in the catalytic mechanism. Position 258 (Arg258) interacts with NADPH. The NADPH site is built by Val282 and Glu284.

It belongs to the NAD-dependent glycerol-3-phosphate dehydrogenase family.

The protein localises to the cytoplasm. It catalyses the reaction sn-glycerol 3-phosphate + NAD(+) = dihydroxyacetone phosphate + NADH + H(+). The catalysed reaction is sn-glycerol 3-phosphate + NADP(+) = dihydroxyacetone phosphate + NADPH + H(+). It functions in the pathway membrane lipid metabolism; glycerophospholipid metabolism. Catalyzes the reduction of the glycolytic intermediate dihydroxyacetone phosphate (DHAP) to sn-glycerol 3-phosphate (G3P), the key precursor for phospholipid synthesis. The polypeptide is Glycerol-3-phosphate dehydrogenase [NAD(P)+] (Shewanella amazonensis (strain ATCC BAA-1098 / SB2B)).